The chain runs to 191 residues: 3-isopropylmalate dehydratase small subunit (191 aa).

This sequence belongs to the LeuD family. LeuD type 1 subfamily. As to quaternary structure, heterodimer of LeuC and LeuD.

It carries out the reaction (2R,3S)-3-isopropylmalate = (2S)-2-isopropylmalate. Its pathway is amino-acid biosynthesis; L-leucine biosynthesis; L-leucine from 3-methyl-2-oxobutanoate: step 2/4. Its function is as follows. Catalyzes the isomerization between 2-isopropylmalate and 3-isopropylmalate, via the formation of 2-isopropylmaleate. The protein is 3-isopropylmalate dehydratase small subunit of Anaeromyxobacter dehalogenans (strain 2CP-1 / ATCC BAA-258).